The primary structure comprises 185 residues: Ribosome-recycling factor (185 aa).

The protein belongs to the RRF family.

The protein localises to the cytoplasm. Responsible for the release of ribosomes from messenger RNA at the termination of protein biosynthesis. May increase the efficiency of translation by recycling ribosomes from one round of translation to another. The sequence is that of Ribosome-recycling factor from Clostridium perfringens (strain ATCC 13124 / DSM 756 / JCM 1290 / NCIMB 6125 / NCTC 8237 / Type A).